Reading from the N-terminus, the 301-residue chain is MEDEVVRIAKKMDKMVQKKNAAGALDLLKELKNIPMTLELLQSTRIGMSVNALRKQSTDEEVTSLAKSLIKSWKKLLDGPSTDKDPEEKKKEPAISSQNSPEAREESSSSSNVSSRKDETNARDTYVSSFPRAPSTSDSVRLKCREMLAAALRTGDDYVAIGADEEELGSQIEEAIYQEIRNTDMKYKNRVRSRISNLKDAKNPNLRKNVLCGNIPPDLFARMTAEEMASDELKEMRKNLTKEAIREHQMAKTGGTQTDLFTCGKCKKKNCTYTQVQTRSADEPMTTFVVCNECGNRWKFC.

An N-acetylmethionine modification is found at Met-1. Residues 3-80 (DEVVRIAKKM…KSWKKLLDGP (78 aa)) enclose the TFIIS N-terminal domain. Lys-55 participates in a covalent cross-link: Glycyl lysine isopeptide (Lys-Gly) (interchain with G-Cter in ubiquitin). 4 positions are modified to phosphoserine: Ser-57, Ser-81, Ser-97, and Ser-100. Residues 76-93 (LLDGPSTDKDPEEKKKEP) show a composition bias toward basic and acidic residues. Residues 76–139 (LLDGPSTDKD…FPRAPSTSDS (64 aa)) form a disordered region. The TFIIS central domain occupies 140–256 (VRLKCREMLA…EHQMAKTGGT (117 aa)). The TFIIS-type zinc finger occupies 259–299 (DLFTCGKCKKKNCTYTQVQTRSADEPMTTFVVCNECGNRWK). Positions 263, 266, 291, and 294 each coordinate Zn(2+).

It belongs to the TFS-II family. As to quaternary structure, interacts with EAF2. Associates with UBR5 and forms a transcription regulatory complex made of CDK9, Pol II, UBR5 and TCEA1/TFIIS. Part of TBP-based Pol II pre-initiation complex (PIC), in which Pol II core assembles with general transcription factors and other specific initiation factors including GTF2E1, GTF2E2, GTF2F1, GTF2F2, TCEA1, ERCC2, ERCC3, GTF2H2, GTF2H3, GTF2H4, GTF2H5, GTF2A1, GTF2A2, GTF2B and TBP; this large multi-subunit PIC complex mediates DNA unwinding and targets Pol II core to the transcription start site where the first phosphodiester bond forms.

It is found in the nucleus. Its function is as follows. Necessary for efficient RNA polymerase II transcription elongation past template-encoded arresting sites. The arresting sites in DNA have the property of trapping a certain fraction of elongating RNA polymerases that pass through, resulting in locked ternary complexes. Cleavage of the nascent transcript by S-II allows the resumption of elongation from the new 3'-terminus. The chain is Transcription elongation factor A protein 1 (Tcea1) from Mus musculus (Mouse).